Reading from the N-terminus, the 132-residue chain is Interleukin-13 (132 aa).

The first 18 residues, 1–18, serve as a signal peptide directing secretion; it reads MALLLTTVIALTCLGGFA. N-linked (GlcNAc...) asparagine glycosylation is found at asparagine 38, asparagine 49, asparagine 57, and asparagine 72. Disulfide bonds link cysteine 48/cysteine 76 and cysteine 64/cysteine 90.

It belongs to the IL-4/IL-13 family. As to quaternary structure, interacts with IL13RA2.

Its subcellular location is the secreted. Cytokine that plays important roles in allergic inflammation and immune response to parasite infection. Synergizes with IL2 in regulating interferon-gamma synthesis. Stimulates B-cell proliferation, and activation of eosinophils, basophils, and mast cells. Plays an important role in controlling IL33 activity by modulating the production of transmembrane and soluble forms of interleukin-1 receptor-like 1/IL1RL1. Displays the capacity to antagonize Th1-driven proinflammatory immune response and downregulates synthesis of many proinflammatory cytokines including IL1, IL6, IL10, IL12 and TNF-alpha through a mechanism that partially involves suppression of NF-kappa-B. Also functions on nonhematopoietic cells, including endothelial cells where it induces vascular cell adhesion protein 1/VCAM1, which is important in the recruitment of eosinophils. Exerts its biological effects through its receptors which comprises the IL4R chain and the IL13RA1 chain, to activate JAK1 and TYK2, leading to the activation of STAT6. Aside from IL13RA1, another receptor IL13RA2 acts as a high affinity decoy for IL13 and mediates internalization and depletion of extracellular IL13. The chain is Interleukin-13 (IL13) from Macaca mulatta (Rhesus macaque).